A 428-amino-acid polypeptide reads, in one-letter code: D-inositol 3-phosphate glycosyltransferase (428 aa).

Residue H5 coordinates 1D-myo-inositol 3-phosphate. UDP-N-acetyl-alpha-D-glucosamine is bound by residues 11 to 12 and G19; that span reads QP. 1D-myo-inositol 3-phosphate-binding positions include 16–21, K74, Y107, T131, and R151; that span reads DAGGMN. Positions 225, 230, and 283 each coordinate UDP-N-acetyl-alpha-D-glucosamine. Positions 292, 293, and 295 each coordinate Mg(2+). UDP-N-acetyl-alpha-D-glucosamine is bound by residues E305 and E313. Mg(2+) is bound at residue T319.

It belongs to the glycosyltransferase group 1 family. MshA subfamily. As to quaternary structure, homodimer.

It carries out the reaction 1D-myo-inositol 3-phosphate + UDP-N-acetyl-alpha-D-glucosamine = 1D-myo-inositol 2-acetamido-2-deoxy-alpha-D-glucopyranoside 3-phosphate + UDP + H(+). In terms of biological role, catalyzes the transfer of a N-acetyl-glucosamine moiety to 1D-myo-inositol 3-phosphate to produce 1D-myo-inositol 2-acetamido-2-deoxy-glucopyranoside 3-phosphate in the mycothiol biosynthesis pathway. The chain is D-inositol 3-phosphate glycosyltransferase from Mycobacterium leprae (strain Br4923).